The sequence spans 909 residues: Valine--tRNA ligase (909 aa).

Residues 52 to 62 (PNVTGVLHVGH) carry the 'HIGH' region motif. The 'KMSKS' region signature appears at 542-546 (KMSKS). Lysine 545 is a binding site for ATP. Positions 843–902 (IDIDQLKKRFEKELEKNEQNASKIDSKLKNENFVKNAPPEVIEGEKEKHAEFLRRIEKLK) form a coiled coil.

It belongs to the class-I aminoacyl-tRNA synthetase family. ValS type 1 subfamily. As to quaternary structure, monomer.

It is found in the cytoplasm. The catalysed reaction is tRNA(Val) + L-valine + ATP = L-valyl-tRNA(Val) + AMP + diphosphate. Its function is as follows. Catalyzes the attachment of valine to tRNA(Val). As ValRS can inadvertently accommodate and process structurally similar amino acids such as threonine, to avoid such errors, it has a 'posttransfer' editing activity that hydrolyzes mischarged Thr-tRNA(Val) in a tRNA-dependent manner. This is Valine--tRNA ligase from Treponema denticola (strain ATCC 35405 / DSM 14222 / CIP 103919 / JCM 8153 / KCTC 15104).